Consider the following 337-residue polypeptide: Aspartate carbamoyltransferase catalytic subunit (337 aa).

Carbamoyl phosphate-binding residues include arginine 57 and threonine 58. L-aspartate is bound at residue lysine 86. Positions 107, 135, and 138 each coordinate carbamoyl phosphate. Arginine 172 and arginine 234 together coordinate L-aspartate. Carbamoyl phosphate contacts are provided by leucine 274 and proline 275.

Belongs to the aspartate/ornithine carbamoyltransferase superfamily. ATCase family. In terms of assembly, heterododecamer (2C3:3R2) of six catalytic PyrB chains organized as two trimers (C3), and six regulatory PyrI chains organized as three dimers (R2).

It catalyses the reaction carbamoyl phosphate + L-aspartate = N-carbamoyl-L-aspartate + phosphate + H(+). The protein operates within pyrimidine metabolism; UMP biosynthesis via de novo pathway; (S)-dihydroorotate from bicarbonate: step 2/3. Functionally, catalyzes the condensation of carbamoyl phosphate and aspartate to form carbamoyl aspartate and inorganic phosphate, the committed step in the de novo pyrimidine nucleotide biosynthesis pathway. In Saccharophagus degradans (strain 2-40 / ATCC 43961 / DSM 17024), this protein is Aspartate carbamoyltransferase catalytic subunit.